The sequence spans 252 residues: 3-dehydroquinate dehydratase (252 aa).

Residues Glu-46–Arg-48 and Arg-82 each bind 3-dehydroquinate. Catalysis depends on His-143, which acts as the Proton donor/acceptor. Lys-170 serves as the catalytic Schiff-base intermediate with substrate. Positions 212, 231, and 235 each coordinate 3-dehydroquinate.

This sequence belongs to the type-I 3-dehydroquinase family. As to quaternary structure, homodimer.

It catalyses the reaction 3-dehydroquinate = 3-dehydroshikimate + H2O. Its pathway is metabolic intermediate biosynthesis; chorismate biosynthesis; chorismate from D-erythrose 4-phosphate and phosphoenolpyruvate: step 3/7. Involved in the third step of the chorismate pathway, which leads to the biosynthesis of aromatic amino acids. Catalyzes the cis-dehydration of 3-dehydroquinate (DHQ) and introduces the first double bond of the aromatic ring to yield 3-dehydroshikimate. The protein is 3-dehydroquinate dehydratase of Listeria welshimeri serovar 6b (strain ATCC 35897 / DSM 20650 / CCUG 15529 / CIP 8149 / NCTC 11857 / SLCC 5334 / V8).